Here is a 354-residue protein sequence, read N- to C-terminus: Serum paraoxonase/arylesterase 2 (354 aa).

The cysteines at positions 42 and 352 are disulfide-linked. Positions 53 and 54 each coordinate Ca(2+). His114 (proton acceptor) is an active-site residue. Ca(2+) is bound by residues Ile116, Asn167, Asp168, and Asn223. N-linked (GlcNAc...) asparagine glycosylation occurs at Asn254. Ca(2+)-binding residues include Asp268 and Asn269. Residues Asn269 and Asn323 are each glycosylated (N-linked (GlcNAc...) asparagine).

Belongs to the paraoxonase family. Homotrimer. Requires Ca(2+) as cofactor. Glycosylated. In terms of processing, the signal sequence is not cleaved.

Its subcellular location is the membrane. The enzyme catalyses a phenyl acetate + H2O = a phenol + acetate + H(+). It catalyses the reaction an N-acyl-L-homoserine lactone + H2O = an N-acyl-L-homoserine + H(+). Its function is as follows. Capable of hydrolyzing lactones and a number of aromatic carboxylic acid esters. The polypeptide is Serum paraoxonase/arylesterase 2 (Pon2) (Rattus norvegicus (Rat)).